The following is a 141-amino-acid chain: Putative pre-16S rRNA nuclease (141 aa).

The protein belongs to the YqgF nuclease family.

The protein localises to the cytoplasm. Functionally, could be a nuclease involved in processing of the 5'-end of pre-16S rRNA. In Sodalis glossinidius (strain morsitans), this protein is Putative pre-16S rRNA nuclease.